Reading from the N-terminus, the 676-residue chain is ATP-dependent zinc metalloprotease FTSH 2, chloroplastic (676 aa).

The transit peptide at 1–32 directs the protein to the chloroplast; sequence MAPTSMSLAAKTPLPFSTLPSSGVAQRPVSVT. The chain crosses the membrane as a helical span at residues 155 to 175; the sequence is LLFNLIGNLAFPLILIGGLFL. 254 to 261 is an ATP binding site; that stretch reads GPPGTGKT. Residue H475 coordinates Zn(2+). E476 is an active-site residue. 2 residues coordinate Zn(2+): H479 and D553.

This sequence in the N-terminal section; belongs to the AAA ATPase family. It in the C-terminal section; belongs to the peptidase M41 family. It depends on Zn(2+) as a cofactor.

The protein resides in the plastid. The protein localises to the chloroplast thylakoid membrane. Probable ATP-dependent zinc metallopeptidase. The chain is ATP-dependent zinc metalloprotease FTSH 2, chloroplastic (FTSH2) from Oryza sativa subsp. japonica (Rice).